A 126-amino-acid polypeptide reads, in one-letter code: Flagellar protein FliT (126 aa).

A required for homodimerization region spans residues 1–50; sequence MASPHRLLKDYQQLLSLSQKILHLAVNGQWDTLVEQEIVYVQSVEGLVNT. Positions 60–98 are fliD binding; it reads MRLHLRQILQEVMDNEAKVKQLLQKRMDELSSLMGQSLK.

Belongs to the FliT family. Homodimer. Interacts with FliD and FlhC.

Its subcellular location is the cytoplasm. It localises to the cytosol. Functionally, dual-function protein that regulates the transcription of class 2 flagellar operons and that also acts as an export chaperone for the filament-capping protein FliD. As a transcriptional regulator, acts as an anti-FlhDC factor; it directly binds FlhC, thus inhibiting the binding of the FlhC/FlhD complex to class 2 promoters, resulting in decreased expression of class 2 flagellar operons. As a chaperone, effects FliD transition to the membrane by preventing its premature polymerization, and by directing it to the export apparatus. The chain is Flagellar protein FliT from Pectobacterium carotovorum subsp. carotovorum (strain PC1).